The sequence spans 156 residues: Small ribosomal subunit protein uS7 (156 aa).

The protein belongs to the universal ribosomal protein uS7 family. As to quaternary structure, part of the 30S ribosomal subunit. Contacts proteins S9 and S11.

In terms of biological role, one of the primary rRNA binding proteins, it binds directly to 16S rRNA where it nucleates assembly of the head domain of the 30S subunit. Is located at the subunit interface close to the decoding center, probably blocks exit of the E-site tRNA. In Aliivibrio fischeri (strain MJ11) (Vibrio fischeri), this protein is Small ribosomal subunit protein uS7.